Here is a 372-residue protein sequence, read N- to C-terminus: Glutamate 5-kinase (372 aa).

Lys14 serves as a coordination point for ATP. Substrate is bound by residues Ser54, Asp141, and Asn153. 173–174 (TD) lines the ATP pocket. One can recognise a PUA domain in the interval 280 to 358 (RGTLVLDDGA…ESIVRELGYM (79 aa)).

The protein belongs to the glutamate 5-kinase family.

The protein resides in the cytoplasm. The catalysed reaction is L-glutamate + ATP = L-glutamyl 5-phosphate + ADP. It participates in amino-acid biosynthesis; L-proline biosynthesis; L-glutamate 5-semialdehyde from L-glutamate: step 1/2. Its function is as follows. Catalyzes the transfer of a phosphate group to glutamate to form L-glutamate 5-phosphate. This is Glutamate 5-kinase from Pseudomonas syringae pv. syringae (strain B728a).